We begin with the raw amino-acid sequence, 609 residues long: MQQSQRLSQMLFVTLREDPVEAELPSHKLLLRGCFIRRLSPGIYTYLPLLWRVLQKISEIVRQEMNAIGGQECLLPQLQPAEIWRESGRWDVYTQAEGIMFALKDRQGREQSLGPTHEEVITLLARDLIRSYRQLPQTLYQIQTKFRDEIRPRFGLMRGREFIMKDAYSFHANEESLRQTYQDMYRAYSRILRRCGLEFRVVDADAGAIGGPSAASQEFMVLASAGEDEILYTPDGSYAANVEKAVSIPPPAAESPYTAFQVLDTPGTETIEKLAAFLKISSTLIVKNVLYQALYDNGLRVAVLLSIRGDQEVNEVKLANHLSRLAERYQASKLLKLALADAEIQNSWQGDPIPVGYIAPDLPDSCLGRQKNLAPQILRLADQTAALLQNFVTGGNQVGQHVVGANWGEQYPLPEVVDVRKAQAGDRCLLNPDQILETARGIEIGHIFQLGLKFSLPMRATFTDEQGSEQPLWMGCYGIGVSRLAQAAVEQSHDANGIIWPVAIAPYHVVVVVPNISDPEQMSVAEKLVQDLATAGIETLWDDRDERAGVKFKDADLIGIPYRITTGRSLKQGKVELTERASGQATEIPIEEVVTTLKERIEAALAVPD.

The protein belongs to the class-II aminoacyl-tRNA synthetase family. ProS type 1 subfamily. As to quaternary structure, homodimer.

It localises to the cytoplasm. The catalysed reaction is tRNA(Pro) + L-proline + ATP = L-prolyl-tRNA(Pro) + AMP + diphosphate. Catalyzes the attachment of proline to tRNA(Pro) in a two-step reaction: proline is first activated by ATP to form Pro-AMP and then transferred to the acceptor end of tRNA(Pro). As ProRS can inadvertently accommodate and process non-cognate amino acids such as alanine and cysteine, to avoid such errors it has two additional distinct editing activities against alanine. One activity is designated as 'pretransfer' editing and involves the tRNA(Pro)-independent hydrolysis of activated Ala-AMP. The other activity is designated 'posttransfer' editing and involves deacylation of mischarged Ala-tRNA(Pro). The misacylated Cys-tRNA(Pro) is not edited by ProRS. This chain is Proline--tRNA ligase, found in Synechococcus sp. (strain JA-2-3B'a(2-13)) (Cyanobacteria bacterium Yellowstone B-Prime).